The chain runs to 405 residues: Aspartokinase (405 aa).

7–10 (KYGG) lines the ATP pocket. Residue 25–30 (RIAHYR) participates in substrate binding. S41 is a binding site for ATP. Substrate-binding positions include 47–49 (TDE), E74, 125–126 (LE), 150–153 (RGGS), and S153. ATP-binding positions include 173–174 (TD), 179–184 (YTTDPH), and R209. 2 ACT domains span residues 263-342 (IGLI…IAKV) and 344-405 (IVGV…LDKA). Residues D270, 288–290 (AVD), Q294, 355–356 (VP), 369–370 (NI), and 376–377 (SE) contribute to the substrate site.

This sequence belongs to the aspartokinase family. In terms of assembly, tetramer consisting of 2 isoforms Alpha (catalytic and regulation) and of a homodimer of 2 isoforms Beta (regulation).

It catalyses the reaction L-aspartate + ATP = 4-phospho-L-aspartate + ADP. It functions in the pathway amino-acid biosynthesis; L-lysine biosynthesis via DAP pathway; (S)-tetrahydrodipicolinate from L-aspartate: step 1/4. The protein operates within amino-acid biosynthesis; L-methionine biosynthesis via de novo pathway; L-homoserine from L-aspartate: step 1/3. Its pathway is amino-acid biosynthesis; L-threonine biosynthesis; L-threonine from L-aspartate: step 1/5. Functionally, catalyzes the phosphorylation of the beta-carboxyl group of aspartic acid with ATP to yield 4-phospho-L-aspartate, which is involved in the branched biosynthetic pathway leading to the biosynthesis of amino acids lysine, threonine, isoleucine and methionine. The polypeptide is Aspartokinase (ask) (Thermus thermophilus (strain ATCC BAA-163 / DSM 7039 / HB27)).